The sequence spans 311 residues: Aspartate carbamoyltransferase catalytic subunit (311 aa).

Residues arginine 55 and threonine 56 each contribute to the carbamoyl phosphate site. Lysine 85 lines the L-aspartate pocket. Carbamoyl phosphate-binding residues include arginine 106, histidine 135, and glutamine 138. Residues arginine 168 and arginine 230 each coordinate L-aspartate. Residues leucine 268 and proline 269 each contribute to the carbamoyl phosphate site.

It belongs to the aspartate/ornithine carbamoyltransferase superfamily. ATCase family. Heterododecamer (2C3:3R2) of six catalytic PyrB chains organized as two trimers (C3), and six regulatory PyrI chains organized as three dimers (R2).

It carries out the reaction carbamoyl phosphate + L-aspartate = N-carbamoyl-L-aspartate + phosphate + H(+). Its pathway is pyrimidine metabolism; UMP biosynthesis via de novo pathway; (S)-dihydroorotate from bicarbonate: step 2/3. In terms of biological role, catalyzes the condensation of carbamoyl phosphate and aspartate to form carbamoyl aspartate and inorganic phosphate, the committed step in the de novo pyrimidine nucleotide biosynthesis pathway. The polypeptide is Aspartate carbamoyltransferase catalytic subunit (Salmonella dublin (strain CT_02021853)).